Consider the following 312-residue polypeptide: Malate dehydrogenase (312 aa).

NAD(+)-binding positions include G7–G13 and D34. R81 and R87 together coordinate substrate. NAD(+)-binding positions include N94 and I117 to N119. Positions 119 and 153 each coordinate substrate. The Proton acceptor role is filled by H177. M227 serves as a coordination point for NAD(+).

Belongs to the LDH/MDH superfamily. MDH type 1 family. Homodimer.

The catalysed reaction is (S)-malate + NAD(+) = oxaloacetate + NADH + H(+). In terms of biological role, catalyzes the reversible oxidation of malate to oxaloacetate. In Klebsiella pneumoniae (strain 342), this protein is Malate dehydrogenase.